A 294-amino-acid polypeptide reads, in one-letter code: UDP-N-acetylenolpyruvoylglucosamine reductase (294 aa).

Residues 26-189 (VGGQADVLFK…IEAEFKGVSS (164 aa)) form the FAD-binding PCMH-type domain. Residue arginine 169 is part of the active site. Cysteine 218 (proton donor) is an active-site residue. Residue glutamate 288 is part of the active site.

It belongs to the MurB family. It depends on FAD as a cofactor.

The protein localises to the cytoplasm. The catalysed reaction is UDP-N-acetyl-alpha-D-muramate + NADP(+) = UDP-N-acetyl-3-O-(1-carboxyvinyl)-alpha-D-glucosamine + NADPH + H(+). It functions in the pathway cell wall biogenesis; peptidoglycan biosynthesis. In terms of biological role, cell wall formation. The polypeptide is UDP-N-acetylenolpyruvoylglucosamine reductase (Wolbachia pipientis subsp. Culex pipiens (strain wPip)).